Here is a 576-residue protein sequence, read N- to C-terminus: (+)-alpha-terpineol synthase (576 aa).

Residues Arg286, Asp323, Asp327, Arg466, and Asn469 each coordinate (2E)-geranyl diphosphate. Mg(2+) contacts are provided by Asp323 and Asp327. The DDXXD motif signature appears at 323 to 327; that stretch reads DDVYD. Positions 469, 473, and 477 each coordinate Mg(2+).

This sequence belongs to the terpene synthase family. Tpsb subfamily. It depends on Mg(2+) as a cofactor. Mn(2+) serves as cofactor.

The catalysed reaction is (2E,6E)-farnesyl diphosphate = beta-bisabolene + diphosphate. The enzyme catalyses (2E)-geranyl diphosphate + H2O = (R)-alpha-terpineol + diphosphate. It catalyses the reaction (2E)-geranyl diphosphate = (4S)-limonene + diphosphate. The protein operates within secondary metabolite biosynthesis; terpenoid biosynthesis. Its function is as follows. Monoterpene synthase which catalyzes the conversion of (2E)-geranyl diphosphate (GPP) to (R)-alpha-terpineol and (4S)-limonene, as well as small quantities of linalool, myrcene, (-)-alpha-pinene, (+)-sabinene and geraniol. To a lower extent, catalyzes the conversion of (2E,6E)-farnesyl diphosphate (FPP) to beta-bisabolene. This Santalum album (White sandalwood) protein is (+)-alpha-terpineol synthase.